We begin with the raw amino-acid sequence, 136 residues long: Purkinje cell protein 2 homolog (136 aa).

Disordered regions lie at residues 1-64 (MMDQ…PEMD) and 86-136 (SSLP…TQAP). The 23-residue stretch at 23–45 (QEGFFNLLSHVQGDRMEGQRCSL) folds into the GoLoco 1 domain. A compositionally biased stretch (polar residues) spans 49–59 (PGQTTKSQSDP). Residues 63-85 (MDSLMDMLASTQGRRMDDQRVTV) form the GoLoco 2 domain. A compositionally biased stretch (polar residues) spans 107–117 (LSPQPLLTPQD). Serine 127 is modified (phosphoserine).

Its function is as follows. May function as a cell-type specific modulator for G protein-mediated cell signaling. The sequence is that of Purkinje cell protein 2 homolog (PCP2) from Homo sapiens (Human).